Consider the following 135-residue polypeptide: Probable histone H2A.1 (135 aa).

It belongs to the histone H2A family. In terms of assembly, the nucleosome is a histone octamer containing two molecules each of H2A, H2B, H3 and H4 assembled in one H3-H4 heterotetramer and two H2A-H2B heterodimers. The octamer wraps approximately 147 bp of DNA.

Its subcellular location is the nucleus. The protein localises to the chromosome. Functionally, core component of nucleosome. Nucleosomes wrap and compact DNA into chromatin, limiting DNA accessibility to the cellular machineries which require DNA as a template. Histones thereby play a central role in transcription regulation, DNA repair, DNA replication and chromosomal stability. DNA accessibility is regulated via a complex set of post-translational modifications of histones, also called histone code, and nucleosome remodeling. This Oryza sativa subsp. japonica (Rice) protein is Probable histone H2A.1.